The following is a 181-amino-acid chain: Alkyl hydroperoxide reductase AhpD (181 aa).

Cys-131 acts as the Proton donor in catalysis. Cysteines 131 and 134 form a disulfide. Cys-134 functions as the Cysteine sulfenic acid (-SOH) intermediate in the catalytic mechanism.

It belongs to the AhpD family.

The enzyme catalyses N(6)-[(R)-dihydrolipoyl]-L-lysyl-[lipoyl-carrier protein] + a hydroperoxide = N(6)-[(R)-lipoyl]-L-lysyl-[lipoyl-carrier protein] + an alcohol + H2O. In terms of biological role, antioxidant protein with alkyl hydroperoxidase activity. Required for the reduction of the AhpC active site cysteine residues and for the regeneration of the AhpC enzyme activity. In Bradyrhizobium sp. (strain ORS 278), this protein is Alkyl hydroperoxide reductase AhpD.